The sequence spans 130 residues: Small ribosomal subunit protein uS9 (130 aa).

It belongs to the universal ribosomal protein uS9 family.

This chain is Small ribosomal subunit protein uS9, found in Pseudoalteromonas atlantica (strain T6c / ATCC BAA-1087).